A 119-amino-acid polypeptide reads, in one-letter code: Small ribosomal subunit protein uS17 (119 aa).

The span at 1 to 21 (MAEAKTGAKATKSAAAGAADG) shows a compositional bias: low complexity. The tract at residues 1 to 44 (MAEAKTGAKATKSAAAGAADGASKEKGPKHTPSTPKPRGRRKTR) is disordered.

This sequence belongs to the universal ribosomal protein uS17 family. Part of the 30S ribosomal subunit.

In terms of biological role, one of the primary rRNA binding proteins, it binds specifically to the 5'-end of 16S ribosomal RNA. The chain is Small ribosomal subunit protein uS17 from Mycobacterium marinum (strain ATCC BAA-535 / M).